The sequence spans 122 residues: Ribonuclease pancreatic (122 aa).

Residues lysine 6 and arginine 9 each contribute to the substrate site. Catalysis depends on histidine 11, which acts as the Proton acceptor. Disulfide bonds link cysteine 25-cysteine 83, cysteine 39-cysteine 94, cysteine 57-cysteine 109, and cysteine 64-cysteine 71. Substrate-binding positions include 40–44 (KPVNT), lysine 65, and arginine 84. The Proton donor role is filled by histidine 117.

This sequence belongs to the pancreatic ribonuclease family. As to quaternary structure, monomer. Interacts with and forms tight 1:1 complexes with RNH1. Dimerization of two such complexes may occur. Interaction with RNH1 inhibits this protein. Pancreas.

The protein localises to the secreted. The enzyme catalyses an [RNA] containing cytidine + H2O = an [RNA]-3'-cytidine-3'-phosphate + a 5'-hydroxy-ribonucleotide-3'-[RNA].. It carries out the reaction an [RNA] containing uridine + H2O = an [RNA]-3'-uridine-3'-phosphate + a 5'-hydroxy-ribonucleotide-3'-[RNA].. In terms of biological role, endonuclease that catalyzes the cleavage of RNA on the 3' side of pyrimidine nucleotides. Acts on single-stranded and double-stranded RNA. In Notamacropus rufogriseus (Red-necked wallaby), this protein is Ribonuclease pancreatic.